A 716-amino-acid polypeptide reads, in one-letter code: Polyribonucleotide nucleotidyltransferase (716 aa).

Positions 486 and 492 each coordinate Mg(2+). Residues 553–612 (PHIYNIKINPEKIKDVIGKGGAVIRALSDETDTKIDISDDGNITIAALSQKSAAFAQQRI) enclose the KH domain. The S1 motif domain maps to 622-690 (GRIYQGTVTR…RQGRIRLSIK (69 aa)).

Belongs to the polyribonucleotide nucleotidyltransferase family. As to quaternary structure, component of the RNA degradosome, which is a multiprotein complex involved in RNA processing and mRNA degradation. Requires Mg(2+) as cofactor.

Its subcellular location is the cytoplasm. The enzyme catalyses RNA(n+1) + phosphate = RNA(n) + a ribonucleoside 5'-diphosphate. Functionally, involved in mRNA degradation. Catalyzes the phosphorolysis of single-stranded polyribonucleotides processively in the 3'- to 5'-direction. This Hamiltonella defensa subsp. Acyrthosiphon pisum (strain 5AT) protein is Polyribonucleotide nucleotidyltransferase.